The chain runs to 180 residues: tRNA (cytidine(56)-2'-O)-methyltransferase (180 aa).

S-adenosyl-L-methionine contacts are provided by residues Leu84 and Gly112 to Val116.

Belongs to the aTrm56 family. As to quaternary structure, homodimer.

The protein localises to the cytoplasm. The catalysed reaction is cytidine(56) in tRNA + S-adenosyl-L-methionine = 2'-O-methylcytidine(56) in tRNA + S-adenosyl-L-homocysteine + H(+). Functionally, specifically catalyzes the AdoMet-dependent 2'-O-ribose methylation of cytidine at position 56 in tRNAs. In Haloarcula marismortui (strain ATCC 43049 / DSM 3752 / JCM 8966 / VKM B-1809) (Halobacterium marismortui), this protein is tRNA (cytidine(56)-2'-O)-methyltransferase.